A 284-amino-acid chain; its full sequence is Acetylglutamate kinase (284 aa).

Substrate is bound by residues 64–65 (GG), Arg86, and Asn179.

This sequence belongs to the acetylglutamate kinase family. ArgB subfamily.

It localises to the cytoplasm. The catalysed reaction is N-acetyl-L-glutamate + ATP = N-acetyl-L-glutamyl 5-phosphate + ADP. The protein operates within amino-acid biosynthesis; L-arginine biosynthesis; N(2)-acetyl-L-ornithine from L-glutamate: step 2/4. Its function is as follows. Catalyzes the ATP-dependent phosphorylation of N-acetyl-L-glutamate. This chain is Acetylglutamate kinase, found in Acaryochloris marina (strain MBIC 11017).